The chain runs to 325 residues: Gamma-hemolysin component B (325 aa).

The signal sequence occupies residues 1–25; sequence MNMNKLVKSSVATSMALLLLSNTAN.

The protein belongs to the aerolysin family. As to quaternary structure, toxicity requires sequential binding and synergistic association of a class S and a class F component which form heterooligomeric complexes. HlgB (class F) associates with either hlgA thus forming an AB toxin or with hlgC thus forming a CB toxin. Interacts with host AMFR.

Toxin that seems to act by forming pores in the membrane of the cell. Has a hemolytic and a leucotoxic activity. Promotes host AMFR-mediated inflammation by mediating 'Lys-27'-linked ubiquitination of TAB3, TAK1-TAB3 complex formation and phosphorylation of TAK1/MAP3K7. In turn, activates host NF-kappa-B signaling pathway. This is Gamma-hemolysin component B (hlgB) from Staphylococcus aureus (strain MRSA252).